Here is a 230-residue protein sequence, read N- to C-terminus: UPF0502 protein Patl_1161 (230 aa).

The protein belongs to the UPF0502 family.

The polypeptide is UPF0502 protein Patl_1161 (Pseudoalteromonas atlantica (strain T6c / ATCC BAA-1087)).